Consider the following 491-residue polypeptide: Nucleoside transporter 1.1 (491 aa).

The next 6 membrane-spanning stretches (helical) occupy residues 27–47 (FYVY…VNAV), 82–102 (YNLI…LSWF), 109–129 (VRLL…MVVP), 136–156 (AGAV…KSIF), 173–193 (STMM…QIIV), and 209–229 (KIYY…LILL). Positions 260-273 (CHTDEHPTHDKEGR) are enriched in basic and acidic residues. 2 disordered regions span residues 260–280 (CHTD…SGKE) and 290–309 (AAAK…PHEV). N-linked (GlcNAc...) asparagine glycosylation occurs at asparagine 274. The next 5 helical transmembrane spans lie at 333–353 (MFVA…GIAV), 361–381 (WFST…RFSP), 395–415 (WIIV…LLHS), 427–447 (VMEV…LVLG), and 460–480 (FVAG…GTVL).

Belongs to the SLC29A/ENT transporter (TC 2.A.57) family.

It localises to the membrane. The catalysed reaction is adenosine(in) + H(+)(in) = adenosine(out) + H(+)(out). It carries out the reaction uridine(in) + H(+)(in) = uridine(out) + H(+)(out). Functionally, sodium-independent high affinity nucleoside:H(+) symporter; transports adenosine and uridine. Can transport cytidine and thymidine. This chain is Nucleoside transporter 1.1, found in Leishmania donovani.